Consider the following 363-residue polypeptide: Aminopyrrolnitrin oxygenase PrnD (363 aa).

Residues 29–137 form the Rieske domain; sequence WYVAMRSNEL…TAERYGYVWV (109 aa). [2Fe-2S] cluster is bound by residues Cys69, His71, Cys88, and His91.

In terms of assembly, homodimer. It depends on [2Fe-2S] cluster as a cofactor. Fe cation serves as cofactor. FMN is required as a cofactor.

The catalysed reaction is aminopyrrolnitrin + NADPH + 2 O2 + H(+) = pyrrolnitrin + NADP(+) + 2 H2O. It participates in antibiotic biosynthesis. Functionally, involved in the biosynthesis of the antifungal antibiotic pyrrolnitrin (PRN). Catalyzes the oxidation of the amino group of aminopyrrolnitrin (APRN) to a nitro group to form PRN. It has high substrate specificity toward physiological substrate aminopyrrolnitrin, p-aminobenzylamine (pABA), p-aminobenzyl alcohol, and p-aminophenyl alanine. In Pseudomonas fluorescens, this protein is Aminopyrrolnitrin oxygenase PrnD (prnD).